A 588-amino-acid polypeptide reads, in one-letter code: Actin-histidine N-methyltransferase (588 aa).

A disordered region spans residues 1 to 25 (MGKKSRVKTQKSGTGATASVSPKET). Residues 10-25 (QKSGTGATASVSPKET) are compositionally biased toward polar residues. S-adenosyl-L-methionine contacts are provided by residues R75, 104 to 106 (EGF), R254, 275 to 279 (DMCNH), and 325 to 327 (SGF). Residues 94-314 (EGFEMVNFKE…AGEQIYIFYG (221 aa)) form the SET domain. The tract at residues 546 to 588 (VNGENSIPNGTRSGKENFNQEGSERATEGTKESSSDSTAGARE) is disordered. Over residues 548–566 (GENSIPNGTRSGKENFNQE) the composition is skewed to polar residues. Positions 567 to 579 (GSERATEGTKESS) are enriched in basic and acidic residues.

This sequence belongs to the class V-like SAM-binding methyltransferase superfamily. SETD3 actin-histidine methyltransferase family. In terms of assembly, interacts with MYOD1. In terms of processing, phosphorylated by GSK3B, which is required for recognition by the SCF(FBXW7) complex and subsequent degradation. Ubiquitinated by the SCF(FBXW7) complex following phosphorylation by GSK3B, leading to its degradation by the proteasome.

It is found in the cytoplasm. The protein localises to the nucleus. The enzyme catalyses L-histidyl-[protein] + S-adenosyl-L-methionine = N(tele)-methyl-L-histidyl-[protein] + S-adenosyl-L-homocysteine + H(+). Functionally, protein-histidine N-methyltransferase that specifically mediates 3-methylhistidine (tele-methylhistidine) methylation of actin at 'His-73'. Histidine methylation of actin is required for smooth muscle contraction of the laboring uterus during delivery. Does not have protein-lysine N-methyltransferase activity and probably only catalyzes histidine methylation of actin. The chain is Actin-histidine N-methyltransferase from Canis lupus familiaris (Dog).